The sequence spans 129 residues: Small ribosomal subunit protein bS18c (129 aa).

The tract at residues 1–20 is disordered; that stretch reads MGTSNTQKPQKQVPKRKKYK.

The protein belongs to the bacterial ribosomal protein bS18 family. Part of the 30S ribosomal subunit.

The protein resides in the plastid. It localises to the chloroplast. The polypeptide is Small ribosomal subunit protein bS18c (Stigeoclonium helveticum (Green alga)).